A 298-amino-acid chain; its full sequence is uncharacterized protein (298 aa).

This is an uncharacterized protein from Orgyia pseudotsugata multicapsid polyhedrosis virus (OpMNPV).